Here is a 389-residue protein sequence, read N- to C-terminus: Type 2 DNA topoisomerase 6 subunit A (389 aa).

Residues 13–161 (KARLRAAEVM…MLILSKEKGK (149 aa)) enclose the Topo IIA-type catalytic domain. Tyr-107 (O-(5'-phospho-DNA)-tyrosine intermediate) is an active-site residue. Mg(2+)-binding residues include Glu-208 and Asp-260.

Belongs to the TOP6A family. In terms of assembly, homodimer. Heterotetramer of two Top6A and two Top6B chains. Mg(2+) serves as cofactor.

It catalyses the reaction ATP-dependent breakage, passage and rejoining of double-stranded DNA.. Functionally, relaxes both positive and negative superturns and exhibits a strong decatenase activity. This chain is Type 2 DNA topoisomerase 6 subunit A, found in Aeropyrum pernix (strain ATCC 700893 / DSM 11879 / JCM 9820 / NBRC 100138 / K1).